Consider the following 421-residue polypeptide: E3 ubiquitin-protein ligase MARCHF4 (421 aa).

The first 16 residues, 1-16 (MLLAIGVIVWCWGLLS), serve as a signal peptide directing secretion. Residues 60-79 (ELNAEGNATSSATESHSLAN) are disordered. The span at 65–77 (GNATSSATESHSL) shows a compositional bias: polar residues. The segment at 135-195 (DSGVRTPLCR…ELCYYKYQVI (61 aa)) adopts an RING-CH-type zinc-finger fold. The Zn(2+) site is built by cysteine 143, cysteine 146, cysteine 159, cysteine 161, histidine 169, cysteine 172, cysteine 185, and cysteine 188. 2 consecutive transmembrane segments (helical) span residues 218–238 (IAAAVLGSLFLIASISWLVWS) and 252–272 (LFQICYAMYGFMDLVCIALIV). Disordered stretches follow at residues 319-385 (PLTH…LPDH) and 401-421 (QEPRGQTSNSNRELVMRVTTV). Composition is skewed to polar residues over residues 367-380 (TEPQDSSEPSNGQP) and 403-412 (PRGQTSNSNR).

It is found in the golgi apparatus membrane. It carries out the reaction S-ubiquitinyl-[E2 ubiquitin-conjugating enzyme]-L-cysteine + [acceptor protein]-L-lysine = [E2 ubiquitin-conjugating enzyme]-L-cysteine + N(6)-ubiquitinyl-[acceptor protein]-L-lysine.. Its pathway is protein modification; protein ubiquitination. In terms of biological role, E3 ubiquitin-protein ligase. E3 ubiquitin ligases accept ubiquitin from an E2 ubiquitin-conjugating enzyme in the form of a thioester and then directly transfer the ubiquitin to targeted substrates. The sequence is that of E3 ubiquitin-protein ligase MARCHF4 (marchf4) from Danio rerio (Zebrafish).